Here is a 116-residue protein sequence, read N- to C-terminus: Somatostatin (116 aa).

A signal peptide spans 1-24; sequence MLSCRLQCALAALCIVLALGGVTG. A propeptide spanning residues 35 to 88 is cleaved from the precursor; that stretch reads LQKSLAAATGKQELAKYFLAELLSEPNQTENDALEPEDLPQAAEQDEMRLELQR. Threonine amide is present on T43. Residues C105 and C116 are joined by a disulfide bond.

Belongs to the somatostatin family. In terms of processing, C-terminal amidation of the neuronostatin peptide is required for its biological activity, including for the regulation of mean arterial pressure. As to expression, in the pancreas, somatostatin is expressed in delta cells of the islets of Langerhans. In the stomach, it is expressed in parietal cells of oxyntic mucosa and in the small intestine, it is found in the villus (at protein level). Neuronostatin is expressed in the pancreas in delta cells of the islets of Langerhans, as well as in the stomach, in parietal cells of oxyntic mucosa and in the small intestine, in the villus (at protein level).

The protein resides in the secreted. In terms of biological role, inhibits the secretion of pituitary hormones, including that of growth hormone/somatotropin (GH1), PRL, ACTH, luteinizing hormone (LH) and TSH. Also impairs ghrelin- and GnRH-stimulated secretion of GH1 and LH; the inhibition of ghrelin-stimulated secretion of GH1 can be further increased by neuronostatin. Its function is as follows. May enhance low-glucose-induced glucagon release by pancreatic alpha cells. This effect may be mediated by binding to GPR107 and PKA activation. May regulate cardiac contractile function. May compromise cardiomyocyte viability. In the central nervous system, may impair memory retention and may affect hippocampal excitability. May also have anxiolytic and anorexigenic effects. May play a role in arterial pressure regulation. May inhibit basal, but not ghrelin- or GnRH-stimulated secretion of GH1 or LH, but does not affect the release of other pituitary hormones, including PRL, ACTH, FSH or TSH. Potentiates inhibitory action of somatostatin on ghrelin-stimulated secretion of GH1, but not that on GnRH-stimulated secretion of LH. The chain is Somatostatin (Sst) from Mus musculus (Mouse).